Reading from the N-terminus, the 250-residue chain is tRNA (guanine-N(1)-)-methyltransferase (250 aa).

Residues Gly113 and 133-138 (VGDYVL) each bind S-adenosyl-L-methionine.

The protein belongs to the RNA methyltransferase TrmD family. As to quaternary structure, homodimer.

The protein localises to the cytoplasm. The catalysed reaction is guanosine(37) in tRNA + S-adenosyl-L-methionine = N(1)-methylguanosine(37) in tRNA + S-adenosyl-L-homocysteine + H(+). Functionally, specifically methylates guanosine-37 in various tRNAs. This is tRNA (guanine-N(1)-)-methyltransferase from Proteus mirabilis (strain HI4320).